A 348-amino-acid chain; its full sequence is Anthranilate phosphoribosyltransferase (348 aa).

Residues glycine 89, glycine 92–aspartate 93, threonine 97, asparagine 99–threonine 102, lysine 117–serine 125, and serine 129 contribute to the 5-phospho-alpha-D-ribose 1-diphosphate site. Glycine 89 provides a ligand contact to anthranilate. Serine 101 provides a ligand contact to Mg(2+). Asparagine 120 contributes to the anthranilate binding site. Arginine 175 serves as a coordination point for anthranilate. Mg(2+)-binding residues include aspartate 233 and glutamate 234.

This sequence belongs to the anthranilate phosphoribosyltransferase family. As to quaternary structure, homodimer. Mg(2+) is required as a cofactor.

The catalysed reaction is N-(5-phospho-beta-D-ribosyl)anthranilate + diphosphate = 5-phospho-alpha-D-ribose 1-diphosphate + anthranilate. It functions in the pathway amino-acid biosynthesis; L-tryptophan biosynthesis; L-tryptophan from chorismate: step 2/5. In terms of biological role, catalyzes the transfer of the phosphoribosyl group of 5-phosphorylribose-1-pyrophosphate (PRPP) to anthranilate to yield N-(5'-phosphoribosyl)-anthranilate (PRA). The sequence is that of Anthranilate phosphoribosyltransferase from Shewanella putrefaciens (strain CN-32 / ATCC BAA-453).